The sequence spans 172 residues: Large ribosomal subunit protein bL17 (172 aa).

Positions 127–172 are disordered; it reads KAAKQDRAKRVKGSKKVTGDVAPAVAPVPSAPAETQEEAKAPESAE. The span at 147–159 shows a compositional bias: low complexity; it reads VAPAVAPVPSAPA. Over residues 163 to 172 the composition is skewed to basic and acidic residues; it reads EEAKAPESAE.

Belongs to the bacterial ribosomal protein bL17 family. As to quaternary structure, part of the 50S ribosomal subunit. Contacts protein L32.

This chain is Large ribosomal subunit protein bL17, found in Chlorobium luteolum (strain DSM 273 / BCRC 81028 / 2530) (Pelodictyon luteolum).